Consider the following 390-residue polypeptide: Leucine aminopeptidase 1 (390 aa).

The first 18 residues, 1–18, serve as a signal peptide directing secretion; that stretch reads MKLSTALVLGATATGAWS. Residues 19–90 constitute a propeptide that is removed on maturation; that stretch reads YAIPQLEQEV…FPTLDAGSYV (72 aa). N-linked (GlcNAc...) asparagine glycosylation is present at asparagine 120. Residues histidine 190, aspartate 209, glutamate 248, and aspartate 275 each coordinate Zn(2+). A disulfide bridge links cysteine 324 with cysteine 328. Residue histidine 357 participates in Zn(2+) binding.

It belongs to the peptidase M28 family. M28E subfamily. In terms of assembly, monomer. The cofactor is Zn(2+).

The protein resides in the secreted. In terms of biological role, extracellular aminopeptidase that allows assimilation of proteinaceous substrates. This Emericella nidulans (strain FGSC A4 / ATCC 38163 / CBS 112.46 / NRRL 194 / M139) (Aspergillus nidulans) protein is Leucine aminopeptidase 1 (lap1).